The primary structure comprises 322 residues: Replication factor C small subunit 2 (322 aa).

44 to 51 is a binding site for ATP; it reads GPPGTGKT.

This sequence belongs to the activator 1 small subunits family. RfcS subfamily. Heteromultimer composed of small subunits (RfcS) and large subunits (RfcL).

In terms of biological role, part of the RFC clamp loader complex which loads the PCNA sliding clamp onto DNA. The polypeptide is Replication factor C small subunit 2 (Pyrobaculum arsenaticum (strain DSM 13514 / JCM 11321 / PZ6)).